A 484-amino-acid chain; its full sequence is Xylulose kinase (484 aa).

Met77–His78 contributes to the substrate binding site. The active-site Proton acceptor is Asp233.

It belongs to the FGGY kinase family. As to quaternary structure, homodimer.

The enzyme catalyses D-xylulose + ATP = D-xylulose 5-phosphate + ADP + H(+). It catalyses the reaction 1-deoxy-D-xylulose + ATP = 1-deoxy-D-xylulose 5-phosphate + ADP + H(+). Its activity is regulated as follows. Sugar binding is accompanied by a dramatic hinge-bending movement that enhances interactions with Mg-ATP. Catalyzes the phosphorylation of D-xylulose to D-xylulose 5-phosphate. Also catalyzes the phosphorylation of 1-deoxy-D-xylulose to 1-deoxy-D-xylulose 5-phosphate, with lower efficiency. Can also use D-ribulose, xylitol and D-arabitol, but D-xylulose is preferred over the other substrates. Has a weak substrate-independent Mg-ATP-hydrolyzing activity. This chain is Xylulose kinase, found in Escherichia coli (strain K12).